Reading from the N-terminus, the 522-residue chain is Glycogen synthase (522 aa).

The disordered stretch occupies residues 1-29 (MISAVLDTQGDHPQQQAGDRAAPSVPVPG). An ADP-alpha-D-glucose-binding site is contributed by K58.

Belongs to the glycosyltransferase 1 family. Bacterial/plant glycogen synthase subfamily.

It catalyses the reaction [(1-&gt;4)-alpha-D-glucosyl](n) + ADP-alpha-D-glucose = [(1-&gt;4)-alpha-D-glucosyl](n+1) + ADP + H(+). The protein operates within glycan biosynthesis; glycogen biosynthesis. Synthesizes alpha-1,4-glucan chains using ADP-glucose. In Pseudomonas fluorescens (strain ATCC BAA-477 / NRRL B-23932 / Pf-5), this protein is Glycogen synthase.